A 192-amino-acid chain; its full sequence is Fe/S biogenesis protein NfuA (192 aa).

Positions 149 and 152 each coordinate [4Fe-4S] cluster.

This sequence belongs to the NfuA family. In terms of assembly, homodimer. [4Fe-4S] cluster serves as cofactor.

Involved in iron-sulfur cluster biogenesis. Binds a 4Fe-4S cluster, can transfer this cluster to apoproteins, and thereby intervenes in the maturation of Fe/S proteins. Could also act as a scaffold/chaperone for damaged Fe/S proteins. The chain is Fe/S biogenesis protein NfuA from Tolumonas auensis (strain DSM 9187 / NBRC 110442 / TA 4).